The following is a 2465-amino-acid chain: Protein DOP1A (2465 aa).

Disordered stretches follow at residues 559–600 (PSGQ…SSES), 625–646 (GAAA…TVGS), and 705–733 (TEHQ…KEKN). A compositionally biased stretch (low complexity) spans 633 to 646 (STSSETETASTVGS). Basic and acidic residues predominate over residues 707 to 733 (HQGDLGREQGETSKWDRNSQGDVKEKN). Serine 1266 carries the post-translational modification Phosphoserine. 2 stretches are compositionally biased toward basic and acidic residues: residues 1282-1291 (EKETIVKESG) and 1305-1315 (KKDDDKKKSSN). The disordered stretch occupies residues 1282-1315 (EKETIVKESGKQPGAKPKVKLARKKDDDKKKSSN).

Belongs to the DOP1 family.

It is found in the golgi apparatus membrane. May be involved in protein traffic between late Golgi and early endosomes. The chain is Protein DOP1A from Homo sapiens (Human).